We begin with the raw amino-acid sequence, 55 residues long: Large ribosomal subunit protein bL33 (55 aa).

Belongs to the bacterial ribosomal protein bL33 family.

The protein is Large ribosomal subunit protein bL33 of Azorhizobium caulinodans (strain ATCC 43989 / DSM 5975 / JCM 20966 / LMG 6465 / NBRC 14845 / NCIMB 13405 / ORS 571).